The primary structure comprises 214 residues: Orotate phosphoribosyltransferase (214 aa).

Lys-26 provides a ligand contact to 5-phospho-alpha-D-ribose 1-diphosphate. Position 34 to 35 (34 to 35 (FF)) interacts with orotate. 5-phospho-alpha-D-ribose 1-diphosphate is bound by residues 72-73 (YK), Arg-99, Lys-100, Lys-103, His-105, and 124-132 (DDVITAGTA). Orotate contacts are provided by Thr-128 and Arg-156.

The protein belongs to the purine/pyrimidine phosphoribosyltransferase family. PyrE subfamily. Homodimer. The cofactor is Mg(2+).

The catalysed reaction is orotidine 5'-phosphate + diphosphate = orotate + 5-phospho-alpha-D-ribose 1-diphosphate. It functions in the pathway pyrimidine metabolism; UMP biosynthesis via de novo pathway; UMP from orotate: step 1/2. Its function is as follows. Catalyzes the transfer of a ribosyl phosphate group from 5-phosphoribose 1-diphosphate to orotate, leading to the formation of orotidine monophosphate (OMP). The sequence is that of Orotate phosphoribosyltransferase from Mannheimia succiniciproducens (strain KCTC 0769BP / MBEL55E).